The following is an 853-amino-acid chain: DNA mismatch repair protein MutS (853 aa).

Residue glycine 614–serine 621 coordinates ATP.

It belongs to the DNA mismatch repair MutS family.

This protein is involved in the repair of mismatches in DNA. It is possible that it carries out the mismatch recognition step. This protein has a weak ATPase activity. This chain is DNA mismatch repair protein MutS, found in Escherichia coli O6:H1 (strain CFT073 / ATCC 700928 / UPEC).